Consider the following 307-residue polypeptide: Mitochondrial brown fat uncoupling protein 1 (307 aa).

Over 1-10 (MVSLTTSEVH) the chain is Mitochondrial intermembrane. Residues 11–32 (PTMGVKTFSAGISACLADIITF) form a helical membrane-spanning segment. 3 Solcar repeats span residues 11–102 (PTMG…VQEY), 111–201 (PTLG…MKGA), and 210–295 (DDVP…LKKE). At 33–73 (PLDTAKVRLQIQGEGQTSSTIRYKGVLGTITTLAKTEGWPK) the chain is on the mitochondrial matrix side. Fatty acid 16:0 is bound at residue Lys-56. The helical transmembrane segment at 74–96 (LYSGLPAGIQRQISFASLRIGLY) threads the bilayer. Residues 97–116 (DTVQEYFSSGKETPPTLGNR) are Mitochondrial intermembrane-facing. Residues 117–133 (ISAGLMTGGVAVFIGQP) form a helical membrane-spanning segment. Residues 134 to 178 (TEVVKVRLQAQSHLHGIKPRYTGTYNAYRIIATTESFSTLWKGTT) are Mitochondrial matrix-facing. The chain crosses the membrane as a helical span at residues 179–195 (PNLMRNVIINRTELVTY). At 196 to 212 (DLMKGALVNNQILADDV) the chain is on the mitochondrial intermembrane side. A helical transmembrane segment spans residues 213–232 (PCHLLSALVAGFCTTFLASP). Topologically, residues 233–266 (ADVVKTRFINSLPGQYPSVPSCAMTMLTKEGPTA) are mitochondrial matrix. Residue Cys-254 is modified to Cysteine sulfenic acid (-SOH). Residues 267–289 (FFKGFVPSFLRLASWNVIMFVCF) form a helical membrane-spanning segment. Position 269 (Lys-269) interacts with fatty acid 16:0. Residues 290–307 (EQLKKELMKSRQTMDCTT) lie on the Mitochondrial intermembrane side of the membrane.

It belongs to the mitochondrial carrier (TC 2.A.29) family. Most probably functions as a monomer. Binds one purine nucleotide per monomer. However, has also been suggested to function as a homodimer or a homotetramer. Tightly associates with cardiolipin in the mitochondrion inner membrane; may stabilize and regulate its activity. Post-translationally, may undergo sulfenylation upon cold exposure. May increase the sensitivity of UCP1 thermogenic function to the activation by noradrenaline probably through structural effects. May undergo ubiquitin-mediated proteasomal degradation.

The protein localises to the mitochondrion inner membrane. It carries out the reaction H(+)(in) = H(+)(out). With respect to regulation, has no constitutive proton transporter activity and has to be activated by long-chain fatty acids/LCFAs. Inhibited by purine nucleotides. Both purine nucleotides and LCFAs bind the cytosolic side of the transporter and directly compete to activate or inhibit it. Activated by noradrenaline and reactive oxygen species. Despite lacking canonical translational encoding for selenocysteine, a small pool of the protein has been observed to selectively incorporate selenocysteine at 'Cys-254'. Selenocysteine-modified protein is highly sensitive to redox modification and may constitute a pool of protein highly sensitive to activation by elevated levels of reactive oxygen species (ROS). In terms of biological role, mitochondrial protein responsible for thermogenic respiration, a specialized capacity of brown adipose tissue and beige fat that participates in non-shivering adaptive thermogenesis to temperature and diet variations and more generally to the regulation of energy balance. Functions as a long-chain fatty acid/LCFA and proton symporter, simultaneously transporting one LCFA and one proton through the inner mitochondrial membrane. However, LCFAs remaining associated with the transporter via their hydrophobic tails, it results in an apparent transport of protons activated by LCFAs. Thereby, dissipates the mitochondrial proton gradient and converts the energy of substrate oxydation into heat instead of ATP. Regulates the production of reactive oxygen species/ROS by mitochondria. The polypeptide is Mitochondrial brown fat uncoupling protein 1 (Dicrostonyx groenlandicus (Northern collared lemming)).